Reading from the N-terminus, the 328-residue chain is Porphobilinogen deaminase (328 aa).

An S-(dipyrrolylmethanemethyl)cysteine modification is found at cysteine 245.

It belongs to the HMBS family. In terms of assembly, monomer. It depends on dipyrromethane as a cofactor.

It carries out the reaction 4 porphobilinogen + H2O = hydroxymethylbilane + 4 NH4(+). It participates in porphyrin-containing compound metabolism; protoporphyrin-IX biosynthesis; coproporphyrinogen-III from 5-aminolevulinate: step 2/4. Its pathway is porphyrin-containing compound metabolism; chlorophyll biosynthesis. Tetrapolymerization of the monopyrrole PBG into the hydroxymethylbilane pre-uroporphyrinogen in several discrete steps. The sequence is that of Porphobilinogen deaminase from Gloeobacter violaceus (strain ATCC 29082 / PCC 7421).